The primary structure comprises 414 residues: ATP-dependent Clp protease ATP-binding subunit ClpX (414 aa).

The ClpX-type ZB domain occupies 1 to 51; it reads MADSKTKKKCSFCGRSENEVGFLITGMNGYICDSCATQAYEITQEALGEGR. 4 residues coordinate Zn(2+): Cys-10, Cys-13, Cys-32, and Cys-35. 120 to 127 is a binding site for ATP; the sequence is STGTGKTL.

The protein belongs to the ClpX chaperone family. As to quaternary structure, component of the ClpX-ClpP complex. Forms a hexameric ring that, in the presence of ATP, binds to fourteen ClpP subunits assembled into a disk-like structure with a central cavity, resembling the structure of eukaryotic proteasomes.

Functionally, ATP-dependent specificity component of the Clp protease. It directs the protease to specific substrates. Can perform chaperone functions in the absence of ClpP. The polypeptide is ATP-dependent Clp protease ATP-binding subunit ClpX (Bacteroides thetaiotaomicron (strain ATCC 29148 / DSM 2079 / JCM 5827 / CCUG 10774 / NCTC 10582 / VPI-5482 / E50)).